Here is a 203-residue protein sequence, read N- to C-terminus: ATP-dependent Clp protease proteolytic subunit (203 aa).

The active-site Nucleophile is Ser-107. His-132 is a catalytic residue.

The protein belongs to the peptidase S14 family. In terms of assembly, fourteen ClpP subunits assemble into 2 heptameric rings which stack back to back to give a disk-like structure with a central cavity, resembling the structure of eukaryotic proteasomes.

Its subcellular location is the cytoplasm. It carries out the reaction Hydrolysis of proteins to small peptides in the presence of ATP and magnesium. alpha-casein is the usual test substrate. In the absence of ATP, only oligopeptides shorter than five residues are hydrolyzed (such as succinyl-Leu-Tyr-|-NHMec, and Leu-Tyr-Leu-|-Tyr-Trp, in which cleavage of the -Tyr-|-Leu- and -Tyr-|-Trp bonds also occurs).. Cleaves peptides in various proteins in a process that requires ATP hydrolysis. Has a chymotrypsin-like activity. Plays a major role in the degradation of misfolded proteins. This chain is ATP-dependent Clp protease proteolytic subunit, found in Shewanella woodyi (strain ATCC 51908 / MS32).